The sequence spans 346 residues: NADH-ubiquinone oxidoreductase chain 2 (346 aa).

9 helical membrane-spanning segments follow: residues 7–27, 59–79, 93–115, 151–171, 178–198, 200–220, 242–262, 275–294, and 325–345; these read AIIT…NHWI, YFLT…MNMW, ISCT…HFWF, TTLL…GGLN, IMAF…TLSP, ILLL…LMIN, TMML…GFAP, LSMF…YFYL, and LATI…LKAI.

This sequence belongs to the complex I subunit 2 family.

Its subcellular location is the mitochondrion inner membrane. The enzyme catalyses a ubiquinone + NADH + 5 H(+)(in) = a ubiquinol + NAD(+) + 4 H(+)(out). Functionally, core subunit of the mitochondrial membrane respiratory chain NADH dehydrogenase (Complex I) that is believed to belong to the minimal assembly required for catalysis. Complex I functions in the transfer of electrons from NADH to the respiratory chain. The immediate electron acceptor for the enzyme is believed to be ubiquinone. The polypeptide is NADH-ubiquinone oxidoreductase chain 2 (MT-ND2) (Pelomedusa subrufa (African side-necked turtle)).